We begin with the raw amino-acid sequence, 626 residues long: UPF0313 protein MM_1287 (626 aa).

Residues 206–227 are disordered; that stretch reads GKGKEKAGEQDESENATEEVAK. Positions 320–589 constitute a Radical SAM core domain; the sequence is ALEMVKFSLT…AMQRALMHYR (270 aa). Residues cysteine 334, cysteine 338, and cysteine 341 each contribute to the [4Fe-4S] cluster site.

This sequence belongs to the UPF0313 family. Requires [4Fe-4S] cluster as cofactor.

This chain is UPF0313 protein MM_1287, found in Methanosarcina mazei (strain ATCC BAA-159 / DSM 3647 / Goe1 / Go1 / JCM 11833 / OCM 88) (Methanosarcina frisia).